The sequence spans 250 residues: 3-deoxy-manno-octulosonate cytidylyltransferase (250 aa).

It belongs to the KdsB family.

The protein resides in the cytoplasm. The enzyme catalyses 3-deoxy-alpha-D-manno-oct-2-ulosonate + CTP = CMP-3-deoxy-beta-D-manno-octulosonate + diphosphate. The protein operates within nucleotide-sugar biosynthesis; CMP-3-deoxy-D-manno-octulosonate biosynthesis; CMP-3-deoxy-D-manno-octulosonate from 3-deoxy-D-manno-octulosonate and CTP: step 1/1. It functions in the pathway bacterial outer membrane biogenesis; lipopolysaccharide biosynthesis. Its function is as follows. Activates KDO (a required 8-carbon sugar) for incorporation into bacterial lipopolysaccharide in Gram-negative bacteria. This chain is 3-deoxy-manno-octulosonate cytidylyltransferase, found in Legionella pneumophila (strain Lens).